A 1404-amino-acid polypeptide reads, in one-letter code: DNA-directed RNA polymerase subunit beta' (1404 aa).

4 residues coordinate Zn(2+): Cys70, Cys72, Cys85, and Cys88. 3 residues coordinate Mg(2+): Asp460, Asp462, and Asp464. Residues Cys814, Cys889, Cys896, and Cys899 each coordinate Zn(2+).

This sequence belongs to the RNA polymerase beta' chain family. In terms of assembly, the RNAP catalytic core consists of 2 alpha, 1 beta, 1 beta' and 1 omega subunit. When a sigma factor is associated with the core the holoenzyme is formed, which can initiate transcription. Mg(2+) is required as a cofactor. It depends on Zn(2+) as a cofactor.

It catalyses the reaction RNA(n) + a ribonucleoside 5'-triphosphate = RNA(n+1) + diphosphate. DNA-dependent RNA polymerase catalyzes the transcription of DNA into RNA using the four ribonucleoside triphosphates as substrates. In Xanthomonas axonopodis pv. citri (strain 306), this protein is DNA-directed RNA polymerase subunit beta'.